Here is a 389-residue protein sequence, read N- to C-terminus: Leucine aminopeptidase 1 (389 aa).

Positions 1–18 are cleaved as a signal peptide; the sequence is MKSAALLLPLYAAAFAAA. Residues 19–89 constitute a propeptide that is removed on maturation; sequence AFHHEHAQAV…TLKRRINAAS (71 aa). Asparagine 99 carries an N-linked (GlcNAc...) asparagine glycan. Histidine 188, aspartate 207, glutamate 246, and aspartate 273 together coordinate Zn(2+). A disulfide bridge connects residues cysteine 322 and cysteine 326. Histidine 355 lines the Zn(2+) pocket.

This sequence belongs to the peptidase M28 family. M28E subfamily. As to quaternary structure, monomer. Zn(2+) serves as cofactor.

Its subcellular location is the secreted. Extracellular aminopeptidase that allows assimilation of proteinaceous substrates. The chain is Leucine aminopeptidase 1 (lap1) from Pyrenophora teres f. teres (strain 0-1) (Barley net blotch fungus).